Reading from the N-terminus, the 347-residue chain is Eukaryotic translation initiation factor 3 subunit I (347 aa).

WD repeat units follow at residues 8 to 49, 51 to 89, 149 to 190, 194 to 233, and 291 to 330; these read GHER…GTLD, HMGS…CVQT, THEG…KLVE, VHKD…VLKT, and GHFG…FDFK.

It belongs to the eIF-3 subunit I family. In terms of assembly, component of the eukaryotic translation initiation factor 3 (eIF-3) complex.

The protein resides in the cytoplasm. Functionally, component of the eukaryotic translation initiation factor 3 (eIF-3) complex, which is involved in protein synthesis of a specialized repertoire of mRNAs and, together with other initiation factors, stimulates binding of mRNA and methionyl-tRNAi to the 40S ribosome. The eIF-3 complex specifically targets and initiates translation of a subset of mRNAs involved in cell proliferation. This Candida glabrata (strain ATCC 2001 / BCRC 20586 / JCM 3761 / NBRC 0622 / NRRL Y-65 / CBS 138) (Yeast) protein is Eukaryotic translation initiation factor 3 subunit I.